We begin with the raw amino-acid sequence, 89 residues long: Small ribosomal subunit protein uS15 (89 aa).

The protein belongs to the universal ribosomal protein uS15 family. As to quaternary structure, part of the 30S ribosomal subunit. Forms a bridge to the 50S subunit in the 70S ribosome, contacting the 23S rRNA.

Its function is as follows. One of the primary rRNA binding proteins, it binds directly to 16S rRNA where it helps nucleate assembly of the platform of the 30S subunit by binding and bridging several RNA helices of the 16S rRNA. In terms of biological role, forms an intersubunit bridge (bridge B4) with the 23S rRNA of the 50S subunit in the ribosome. The polypeptide is Small ribosomal subunit protein uS15 (Streptococcus equi subsp. zooepidemicus (strain H70)).